The following is a 39-amino-acid chain: Potassium channel toxin alpha-KTx 2.2 (39 aa).

Cystine bridges form between Cys7-Cys29, Cys13-Cys34, and Cys17-Cys36. The segment at 37-39 (YPH) is interaction with Kv1.3 channels.

Belongs to the short scorpion toxin superfamily. Potassium channel inhibitor family. Alpha-KTx 02 subfamily. Expressed by the venom gland.

The protein localises to the secreted. In terms of biological role, potent inhibitor of voltage-gated potassium channels such as Kv1.1/KCNA1 (IC(50)=0.144 nM), Kv1.2/KCNA2 (IC(50)=0.675 nM), Kv1.3/KCNA3 (IC(50)=0.23 nM) and Shaker (Kd=160 nM). Suppresses expression of the Kv1.3/KCNA3 channel in lipopolysaccharide (LPS)-stimulated mouse macrophages. Down-regulates secretion of nitric oxide (NO) and inflammatory cytokines, such as TNF-alpha/TNF, IL-1beta/IL1B and IL6, in LPS-stimulated mouse macrophages in a manner dependent on Kv1.3/KCNA3 channel blockage. Reduces activation of MAPK and NF-kappa-B signaling pathways in LPS-stimulated mouse macrophages. Modulates intracellular Ca(2+) signaling in human PMA/ionomycin-triggered T-cells. Interferes with the activation of the MAPK, NF-kappa-B and NFATc1 pathways in human PMA/ionomycin-triggered T-cells. Reduces proliferation of human PMA/ionomycin-triggered T-cells. Down-regulates secretion of cytokines, such as TNF-alpha/TNF and IL2, in human PMA/ionomycin-triggered T-cells. This chain is Potassium channel toxin alpha-KTx 2.2, found in Centruroides margaritatus (Central American bark Scorpion).